The following is a 291-amino-acid chain: 6-deoxy-6-sulfogluconolactonase (291 aa).

Positions 17, 148, and 198 each coordinate a divalent metal cation. D198 functions as the Proton donor/acceptor in the catalytic mechanism.

Belongs to the SMP-30/CGR1 family. A divalent metal cation serves as cofactor.

The enzyme catalyses 6-deoxy-6-sulfo-D-glucono-1,5-lactone + H2O = 6-deoxy-6-sulfo-D-gluconate + H(+). In terms of biological role, catalyzes the hydrolysis of 6-deoxy-6-sulfo-D-glucono-1,5-lactone to form 6-deoxy-6-sulfo-D-gluconate. Is involved in a degradation pathway of sulfoquinovose (SQ) that allows P.putida SQ1 to use SQ as the sole carbon and energy source for growth. This Pseudomonas putida (Arthrobacter siderocapsulatus) protein is 6-deoxy-6-sulfogluconolactonase.